Consider the following 389-residue polypeptide: Globin-like protein 6 (389 aa).

A compositionally biased stretch (polar residues) spans M1–V15. Disordered stretches follow at residues M1–S38, R96–S123, and T143–P185. Basic residues predominate over residues S16–S25. In terms of domain architecture, Globin spans H196–Q347. H254 and H286 together coordinate heme b. The interval S367–M389 is disordered. Residues K376–M389 are compositionally biased toward basic and acidic residues.

This sequence belongs to the globin family. In terms of tissue distribution, expressed in the head and tail neurons and nerve cord.

May play a role as physiological sensor for oxygen via redox signaling and/or electron transport. This Caenorhabditis elegans protein is Globin-like protein 6.